The sequence spans 285 residues: GTP-binding protein 8 (285 aa).

An EngB-type G domain is found at 110–283 (QQPEVCFIGR…KCFIADITGS (174 aa)). Residues 118–125 (GRSNVGKS), 147–151 (GHTKK), 165–168 (DMPG), 227–230 (TKID), and 262–264 (ISA) each bind GTP. The Mg(2+) site is built by Ser-125 and Thr-149.

It belongs to the TRAFAC class TrmE-Era-EngA-EngB-Septin-like GTPase superfamily. EngB GTPase family. The cofactor is Mg(2+).

The polypeptide is GTP-binding protein 8 (Gtpbp8) (Mus musculus (Mouse)).